The chain runs to 524 residues: Glutamyl-tRNA(Gln) amidotransferase subunit A (524 aa).

Residues K109 and S184 each act as charge relay system in the active site. S208 acts as the Acyl-ester intermediate in catalysis.

Belongs to the amidase family. GatA subfamily. In terms of assembly, heterotrimer of A, B and C subunits.

The catalysed reaction is L-glutamyl-tRNA(Gln) + L-glutamine + ATP + H2O = L-glutaminyl-tRNA(Gln) + L-glutamate + ADP + phosphate + H(+). Functionally, allows the formation of correctly charged Gln-tRNA(Gln) through the transamidation of misacylated Glu-tRNA(Gln) in organisms which lack glutaminyl-tRNA synthetase. The reaction takes place in the presence of glutamine and ATP through an activated gamma-phospho-Glu-tRNA(Gln). The chain is Glutamyl-tRNA(Gln) amidotransferase subunit A from Tropheryma whipplei (strain Twist) (Whipple's bacillus).